Consider the following 78-residue polypeptide: Exodeoxyribonuclease 7 small subunit (78 aa).

Belongs to the XseB family. As to quaternary structure, heterooligomer composed of large and small subunits.

It localises to the cytoplasm. It catalyses the reaction Exonucleolytic cleavage in either 5'- to 3'- or 3'- to 5'-direction to yield nucleoside 5'-phosphates.. Bidirectionally degrades single-stranded DNA into large acid-insoluble oligonucleotides, which are then degraded further into small acid-soluble oligonucleotides. In Synechococcus sp. (strain JA-3-3Ab) (Cyanobacteria bacterium Yellowstone A-Prime), this protein is Exodeoxyribonuclease 7 small subunit.